The sequence spans 126 residues: Ribosome-binding factor A (126 aa).

Belongs to the RbfA family. In terms of assembly, monomer. Binds 30S ribosomal subunits, but not 50S ribosomal subunits or 70S ribosomes.

The protein resides in the cytoplasm. Functionally, one of several proteins that assist in the late maturation steps of the functional core of the 30S ribosomal subunit. Associates with free 30S ribosomal subunits (but not with 30S subunits that are part of 70S ribosomes or polysomes). Required for efficient processing of 16S rRNA. May interact with the 5'-terminal helix region of 16S rRNA. In Clostridioides difficile (strain 630) (Peptoclostridium difficile), this protein is Ribosome-binding factor A.